The primary structure comprises 92 residues: Small ribosomal subunit protein uS19c (92 aa).

It belongs to the universal ribosomal protein uS19 family.

The protein resides in the plastid. Protein S19 forms a complex with S13 that binds strongly to the 16S ribosomal RNA. This is Small ribosomal subunit protein uS19c from Cuscuta exaltata (Tall dodder).